The following is a 736-amino-acid chain: Putative ATP-dependent RNA helicase CG14443 (736 aa).

Disordered regions lie at residues 32 to 58 (TKSS…SSVL), 73 to 166 (GIEG…GERP), 183 to 237 (NSFK…NSWR), and 265 to 296 (SFTR…NTWK). 2 stretches are compositionally biased toward low complexity: residues 34 to 58 (SSIW…SSVL) and 125 to 160 (SSES…SHGS). Over residues 190-199 (TSRENKESRS) the composition is skewed to basic and acidic residues. Residues 277 to 296 (LCYQDQSKNPSRPSNYNTWK) are compositionally biased toward polar residues. The Q motif motif lies at 330 to 358 (LSFERSGFNATILQQLEDQGYDGPTPIQA). Residues 361–534 (WSIAKEGKNI…NKFLGQYTAI (174 aa)) form the Helicase ATP-binding domain. ATP is bound at residue 374–381 (SGKGTGKT). The DEAD box signature appears at 482 to 485 (DNID). In terms of domain architecture, Helicase C-terminal spans 561–719 (KVERLMKELT…LLQLAEEKMF (159 aa)).

Belongs to the DEAD box helicase family.

It carries out the reaction ATP + H2O = ADP + phosphate + H(+). Functionally, probable ATP-binding RNA helicase. This chain is Putative ATP-dependent RNA helicase CG14443, found in Drosophila melanogaster (Fruit fly).